The sequence spans 294 residues: Syntaxin-19 (294 aa).

The 63-residue stretch at 209–271 (LSEIEQRHKE…NNTKEKFGLA (63 aa)) folds into the t-SNARE coiled-coil homology domain.

It belongs to the syntaxin family. As to quaternary structure, interacts with EGFR.

It is found in the cell membrane. The protein resides in the cytoplasm. Plays a role in endosomal trafficking of the epidermal growth factor receptor (EGFR). In Homo sapiens (Human), this protein is Syntaxin-19 (STX19).